A 178-amino-acid polypeptide reads, in one-letter code: Large ribosomal subunit protein uL6 (178 aa).

This sequence belongs to the universal ribosomal protein uL6 family. Part of the 50S ribosomal subunit.

Functionally, this protein binds to the 23S rRNA, and is important in its secondary structure. It is located near the subunit interface in the base of the L7/L12 stalk, and near the tRNA binding site of the peptidyltransferase center. The sequence is that of Large ribosomal subunit protein uL6 from Limosilactobacillus reuteri (strain DSM 20016) (Lactobacillus reuteri).